The chain runs to 372 residues: Anhydro-N-acetylmuramic acid kinase (372 aa).

14–21 (GTSLDGVD) is a binding site for ATP.

Belongs to the anhydro-N-acetylmuramic acid kinase family.

The enzyme catalyses 1,6-anhydro-N-acetyl-beta-muramate + ATP + H2O = N-acetyl-D-muramate 6-phosphate + ADP + H(+). It functions in the pathway amino-sugar metabolism; 1,6-anhydro-N-acetylmuramate degradation. Its pathway is cell wall biogenesis; peptidoglycan recycling. Catalyzes the specific phosphorylation of 1,6-anhydro-N-acetylmuramic acid (anhMurNAc) with the simultaneous cleavage of the 1,6-anhydro ring, generating MurNAc-6-P. Is required for the utilization of anhMurNAc either imported from the medium or derived from its own cell wall murein, and thus plays a role in cell wall recycling. In Photorhabdus laumondii subsp. laumondii (strain DSM 15139 / CIP 105565 / TT01) (Photorhabdus luminescens subsp. laumondii), this protein is Anhydro-N-acetylmuramic acid kinase.